A 396-amino-acid polypeptide reads, in one-letter code: Phosphoglycerate kinase (396 aa).

Substrate-binding positions include Asp21–Asn23, Arg36, His59–Lys62, Arg119, and Arg156. ATP-binding positions include Lys206, Gly294, Glu325, and Gly352–Ser355.

It belongs to the phosphoglycerate kinase family. Monomer.

The protein resides in the cytoplasm. The catalysed reaction is (2R)-3-phosphoglycerate + ATP = (2R)-3-phospho-glyceroyl phosphate + ADP. It participates in carbohydrate degradation; glycolysis; pyruvate from D-glyceraldehyde 3-phosphate: step 2/5. The sequence is that of Phosphoglycerate kinase from Staphylococcus aureus (strain bovine RF122 / ET3-1).